We begin with the raw amino-acid sequence, 156 residues long: Small ribosomal subunit protein uS7 (156 aa).

Belongs to the universal ribosomal protein uS7 family. As to quaternary structure, part of the 30S ribosomal subunit. Contacts proteins S9 and S11.

In terms of biological role, one of the primary rRNA binding proteins, it binds directly to 16S rRNA where it nucleates assembly of the head domain of the 30S subunit. Is located at the subunit interface close to the decoding center, probably blocks exit of the E-site tRNA. The protein is Small ribosomal subunit protein uS7 of Baumannia cicadellinicola subsp. Homalodisca coagulata.